The primary structure comprises 287 residues: Shikimate dehydrogenase (NADP(+)) (287 aa).

Shikimate-binding positions include 21-23 (SKS) and Thr68. Lys72 (proton acceptor) is an active-site residue. Shikimate contacts are provided by Asn93 and Asp109. NADP(+)-binding positions include 133 to 137 (GAGGA), 157 to 162 (NRTQTK), and Met226. Shikimate is bound at residue Tyr228. Gly250 contacts NADP(+).

Belongs to the shikimate dehydrogenase family. Homodimer.

The enzyme catalyses shikimate + NADP(+) = 3-dehydroshikimate + NADPH + H(+). The protein operates within metabolic intermediate biosynthesis; chorismate biosynthesis; chorismate from D-erythrose 4-phosphate and phosphoenolpyruvate: step 4/7. Functionally, involved in the biosynthesis of the chorismate, which leads to the biosynthesis of aromatic amino acids. Catalyzes the reversible NADPH linked reduction of 3-dehydroshikimate (DHSA) to yield shikimate (SA). This is Shikimate dehydrogenase (NADP(+)) from Shewanella oneidensis (strain ATCC 700550 / JCM 31522 / CIP 106686 / LMG 19005 / NCIMB 14063 / MR-1).